The primary structure comprises 380 residues: Probable cytosolic iron-sulfur protein assembly protein 1 (380 aa).

WD repeat units lie at residues 10 to 49 (AHND…KFPL), 56 to 108 (THKR…VEYD), 135 to 175 (GHEN…EEFE), 182 to 221 (DHSQ…DEWS), 228 to 275 (GHEG…EEDK), 299 to 338 (VHKY…KWVI), and 346 to 380 (HGVH…LWNV).

This sequence belongs to the WD repeat CIA1 family. Interacts with NAR1.

It localises to the cytoplasm. The protein localises to the nucleus. Its function is as follows. Essential component of the cytosolic iron-sulfur (Fe/S) protein assembly machinery. Required for the maturation of extramitochondrial Fe/S proteins. The sequence is that of Probable cytosolic iron-sulfur protein assembly protein 1 from Candida dubliniensis (strain CD36 / ATCC MYA-646 / CBS 7987 / NCPF 3949 / NRRL Y-17841) (Yeast).